The primary structure comprises 309 residues: ADP-L-glycero-D-manno-heptose-6-epimerase (309 aa).

NADP(+) contacts are provided by residues 10–11, 31–32, Lys38, Lys53, 75–79, and Asn92; these read MI, DN, and EGACS. The active-site Proton acceptor is Tyr139. Lys143 contributes to the NADP(+) binding site. A substrate-binding site is contributed by Asn168. NADP(+) contacts are provided by Val169 and Lys177. Residue Lys177 is the Proton acceptor of the active site. Residues Ser179, His186, 200–203, Arg208, and Tyr271 contribute to the substrate site; that span reads FDGS.

This sequence belongs to the NAD(P)-dependent epimerase/dehydratase family. HldD subfamily. Homopentamer. Requires NADP(+) as cofactor.

It carries out the reaction ADP-D-glycero-beta-D-manno-heptose = ADP-L-glycero-beta-D-manno-heptose. It participates in nucleotide-sugar biosynthesis; ADP-L-glycero-beta-D-manno-heptose biosynthesis; ADP-L-glycero-beta-D-manno-heptose from D-glycero-beta-D-manno-heptose 7-phosphate: step 4/4. Functionally, catalyzes the interconversion between ADP-D-glycero-beta-D-manno-heptose and ADP-L-glycero-beta-D-manno-heptose via an epimerization at carbon 6 of the heptose. The protein is ADP-L-glycero-D-manno-heptose-6-epimerase of Serratia proteamaculans (strain 568).